The chain runs to 416 residues: PTS system N-acetylglucosamine-specific EIIC component (416 aa).

One can recognise a PTS EIIC type-1 domain in the interval 16–406 (SGLFQGLQKV…FNLKTPGREP (391 aa)). The next 10 membrane-spanning stretches (helical) occupy residues 68 to 88 (AGGALTGSLPILFCIGVAIGF), 96 to 116 (TALAAVVGFLVYSKVLEAFPV), 130 to 150 (TYNDPGVLGGIIMGLLAAVLW), 170 to 190 (LVPIIMAFVGIVVGVFFGLVW), 196 to 216 (GISNFGEWMTGLGSGGAALFG), 266 to 286 (IFQAGFFPIMMFGLPAAALAM), 298 to 318 (VLGMMISLAATSFVTGVTEPI), 323 to 343 (MFIAPVLYVLHAVLTAISMAI), 344 to 364 (TWGLGVHAGFNFSAGFIDYAL), and 375 to 395 (IIPIGLVFAAIYYVTFRFAIV).

The protein localises to the cell membrane. Its function is as follows. The phosphoenolpyruvate-dependent sugar phosphotransferase system (sugar PTS), a major carbohydrate active transport system, catalyzes the phosphorylation of incoming sugar substrates concomitantly with their translocation across the cell membrane. This system is involved in N-acetylglucosamine (GlcNAc) transport. High-affinity permease, which exhibits a narrow specificity for GlcNAc. Essential for C-signaling between vegetative growth and development. The chain is PTS system N-acetylglucosamine-specific EIIC component from Streptomyces coelicolor (strain ATCC BAA-471 / A3(2) / M145).